The sequence spans 351 residues: N-acetyl-gamma-glutamyl-phosphate reductase (351 aa).

The active site involves C154.

Belongs to the NAGSA dehydrogenase family. Type 1 subfamily.

It is found in the cytoplasm. It carries out the reaction N-acetyl-L-glutamate 5-semialdehyde + phosphate + NADP(+) = N-acetyl-L-glutamyl 5-phosphate + NADPH + H(+). The protein operates within amino-acid biosynthesis; L-arginine biosynthesis; N(2)-acetyl-L-ornithine from L-glutamate: step 3/4. Its function is as follows. Catalyzes the NADPH-dependent reduction of N-acetyl-5-glutamyl phosphate to yield N-acetyl-L-glutamate 5-semialdehyde. This is N-acetyl-gamma-glutamyl-phosphate reductase from Prochlorococcus marinus (strain AS9601).